A 193-amino-acid chain; its full sequence is uncharacterized protein (193 aa).

Disordered regions lie at residues M1–S67 and Q110–S160. 2 stretches are compositionally biased toward low complexity: residues G50–G64 and A148–S160.

This is an uncharacterized protein from Homo sapiens (Human).